The primary structure comprises 468 residues: ATP synthase subunit beta (468 aa).

ATP is bound at residue glycine 155–threonine 162.

The protein belongs to the ATPase alpha/beta chains family. In terms of assembly, F-type ATPases have 2 components, CF(1) - the catalytic core - and CF(0) - the membrane proton channel. CF(1) has five subunits: alpha(3), beta(3), gamma(1), delta(1), epsilon(1). CF(0) has three main subunits: a(1), b(2) and c(9-12). The alpha and beta chains form an alternating ring which encloses part of the gamma chain. CF(1) is attached to CF(0) by a central stalk formed by the gamma and epsilon chains, while a peripheral stalk is formed by the delta and b chains.

The protein localises to the cell membrane. It carries out the reaction ATP + H2O + 4 H(+)(in) = ADP + phosphate + 5 H(+)(out). Its function is as follows. Produces ATP from ADP in the presence of a proton gradient across the membrane. The catalytic sites are hosted primarily by the beta subunits. This chain is ATP synthase subunit beta, found in Streptococcus uberis (strain ATCC BAA-854 / 0140J).